The primary structure comprises 941 residues: Protocadherin alpha-12 (941 aa).

A signal peptide spans 1 to 29 (MVIIGPRGPGSQRLLLSLLLLAAWEVGSG). 6 Cadherin domains span residues 30 to 133 (QLHY…PPVF), 134 to 242 (RERE…GPAF), 243 to 350 (DKPS…VPEV), 351 to 455 (MVTS…APAF), 456 to 565 (AQPE…APAL), and 581 to 678 (VPRS…APKT). The Extracellular portion of the chain corresponds to 30-697 (QLHYSVYEEA…DPEAALVDIN (668 aa)). Asn257 and Asn265 each carry an N-linked (GlcNAc...) asparagine glycan. Asn548 carries N-linked (GlcNAc...) asparagine glycosylation. A helical transmembrane segment spans residues 698-718 (VYLIIAICAVSSLLVLTLLLY). Over 719–941 (TALRCSAPPT…GNSTTDNSDQ (223 aa)) the chain is Cytoplasmic. 5 PXXP repeats span residues 734-737 (PGKP), 790-793 (PRQP), 823-826 (PGGP), 863-866 (GPGN), and 882-885 (PGSP). Positions 734-885 (PGKPTLVCSS…PDKFIIPGSP (152 aa)) are 5 X 4 AA repeats of P-X-X-P. Positions 818 to 941 (ILRAGPGGPD…GNSTTDNSDQ (124 aa)) are disordered. The segment covering 900 to 914 (DKSDFITFGKKEETK) has biased composition (basic and acidic residues).

It is found in the cell membrane. In terms of biological role, potential calcium-dependent cell-adhesion protein. May be involved in the establishment and maintenance of specific neuronal connections in the brain. This chain is Protocadherin alpha-12 (PCDHA12), found in Homo sapiens (Human).